Here is a 156-residue protein sequence, read N- to C-terminus: Non-structural protein 2 (156 aa).

It belongs to the pneumovirus non-structural protein 2 family.

The protein localises to the host cytoplasm. Plays a major role in antagonizing the type I IFN-mediated antiviral response. May also inhibit viral transcription and RNA replication. The chain is Non-structural protein 2 (1B) from Mus musculus (Mouse).